Consider the following 239-residue polypeptide: Probable transcriptional regulatory protein BCG9842_B4761 (239 aa).

The protein belongs to the TACO1 family. YeeN subfamily.

It localises to the cytoplasm. The chain is Probable transcriptional regulatory protein BCG9842_B4761 from Bacillus cereus (strain G9842).